Here is a 243-residue protein sequence, read N- to C-terminus: UPF0246 protein MGAS10750_Spy1880 (243 aa).

This sequence belongs to the UPF0246 family.

This chain is UPF0246 protein MGAS10750_Spy1880, found in Streptococcus pyogenes serotype M4 (strain MGAS10750).